Reading from the N-terminus, the 322-residue chain is Pyridoxal kinase (322 aa).

Met1 bears the N-acetylmethionine mark. Ser22 and Thr57 together coordinate pyridoxal. Pyridoxal 5'-phosphate is bound at residue Thr57. The residue at position 69 (Ser69) is a Phosphoserine. Asp123 contributes to the ATP binding site. Asp123 contacts Na(+). Asp128 is a Mg(2+) binding site. Residue Thr158 participates in Na(+) binding. 160 to 163 is a binding site for ATP; it reads NQFE. A Phosphoserine modification is found at Ser174. Thr196 lines the Na(+) pocket. Residue 196 to 197 coordinates ATP; it reads TS. Ser223 carries the post-translational modification Phosphoserine. Residues 236-238 and Thr243 each bind ATP; that span reads VDA. Residue 244-245 coordinates pyridoxal 5'-phosphate; that stretch reads GD. Asp245 functions as the Proton acceptor in the catalytic mechanism. Ser295 carries the phosphoserine modification.

It belongs to the pyridoxine kinase family. In terms of assembly, homodimer. It depends on Zn(2+) as a cofactor. The cofactor is Mg(2+). The N-terminus is blocked.

It is found in the cytoplasm. Its subcellular location is the cytosol. It catalyses the reaction pyridoxal + ATP = pyridoxal 5'-phosphate + ADP + H(+). The catalysed reaction is pyridoxamine + ATP = pyridoxamine 5'-phosphate + ADP + H(+). The enzyme catalyses pyridoxine + ATP = pyridoxine 5'-phosphate + ADP + H(+). It participates in cofactor metabolism; pyridoxal 5'-phosphate salvage; pyridoxal 5'-phosphate from pyridoxal: step 1/1. It functions in the pathway cofactor metabolism; pyridoxal 5'-phosphate salvage; pyridoxine 5'-phosphate from pyridoxine: step 1/1. Its pathway is cofactor metabolism; pyridoxal 5'-phosphate salvage; pyridoxamine 5'-phosphate from pyridoxamine: step 1/1. Activity is increased in the presence of K(+)or Na(+). Catalyzes the phosphorylation of the dietary vitamin B6 vitamers pyridoxal (PL), pyridoxine (PN) and pyridoxamine (PM) to form pyridoxal 5'-phosphate (PLP), pyridoxine 5'-phosphate (PNP) and pyridoxamine 5'-phosphate (PMP), respectively. PLP is the active form of vitamin B6, and acts as a cofactor for over 140 different enzymatic reactions. This chain is Pyridoxal kinase (PDXK), found in Sus scrofa (Pig).